A 378-amino-acid chain; its full sequence is Succinate--CoA ligase [ADP-forming] subunit beta (378 aa).

The ATP-grasp domain occupies 9–237; sequence RDIVARYGIP…IAGEPESEIK (229 aa). Residues K45, 52-54, I94, and E99 contribute to the ATP site; that span reads GRG. Mg(2+)-binding residues include N192 and D206. Substrate-binding positions include N257 and 314-316; that span reads GIT.

This sequence belongs to the succinate/malate CoA ligase beta subunit family. As to quaternary structure, heterotetramer of two alpha and two beta subunits. Mg(2+) serves as cofactor.

The catalysed reaction is succinate + ATP + CoA = succinyl-CoA + ADP + phosphate. The enzyme catalyses GTP + succinate + CoA = succinyl-CoA + GDP + phosphate. It participates in carbohydrate metabolism; tricarboxylic acid cycle; succinate from succinyl-CoA (ligase route): step 1/1. Functionally, succinyl-CoA synthetase functions in the citric acid cycle (TCA), coupling the hydrolysis of succinyl-CoA to the synthesis of either ATP or GTP and thus represents the only step of substrate-level phosphorylation in the TCA. The beta subunit provides nucleotide specificity of the enzyme and binds the substrate succinate, while the binding sites for coenzyme A and phosphate are found in the alpha subunit. In Herpetosiphon aurantiacus (strain ATCC 23779 / DSM 785 / 114-95), this protein is Succinate--CoA ligase [ADP-forming] subunit beta.